A 396-amino-acid polypeptide reads, in one-letter code: MIRRLAAFSALSGLATAWLPEVNKKITSTNGTNLFTSSNGKIRGVNLGSQFVFEPWIAEKAWSDMGCGGQKSEFDCVSRLGQANANSAFASHWGSWITQDDIAEMVSYGLNTIRVPVGYWMREDLVYSDSEHFPQGGLQYLENLCEWASDAGLYIIIDLHGAPGAQTPQNPFTGQYAPIAGFYQDYQFEGALKFLEWMTTNIHQNDKFRNVGMLEVVNEPVQDAGKVGSMRSSYYPNAFKRIRAAEQSLNIDRNNYLHIQMMDRLWGSGDPNESLTDTYYAAYDDHRYLKWASVAVSKDSYISTSCSDQLNSNTPTIVGEWSLSVPDNVQWNSDWSPDSNKDFYKKWFAAQVTAYERQQGWIFWTWKAQLGDYRWSYQGGLLLTRPGIGDQQVLTL.

The first 17 residues, Met1–Ala17, serve as a signal peptide directing secretion. Asn30 carries an N-linked (GlcNAc...) asparagine glycan. Glu219 acts as the Proton donor in catalysis. N-linked (GlcNAc...) asparagine glycosylation occurs at Asn272. The active-site Nucleophile is Glu320.

The protein belongs to the glycosyl hydrolase 5 (cellulase A) family.

It localises to the secreted. It catalyses the reaction Random hydrolysis of (1-&gt;6)-linkages in (1-&gt;6)-beta-D-glucans.. Its function is as follows. Beta-glucanases participate in the metabolism of beta-glucan, the main structural component of the cell wall. Acts on lutean, pustulan and 1,6-oligo-beta-D-glucosides. This Aspergillus fumigatus (strain ATCC MYA-4609 / CBS 101355 / FGSC A1100 / Af293) (Neosartorya fumigata) protein is Probable glucan endo-1,6-beta-glucosidase B (exgB).